We begin with the raw amino-acid sequence, 607 residues long: MAKNYGDVYHVEGWGEPYFAVNKDGHLCVRIYGRETLPGQEIDVLSVIEQATSADGTGKKLQFPMILRFPDVLRHRINSLHTAFANAIKYTQYGSVYQGVFPVKVNQHKDVVQDMVHFGYDHSYGLEAGSKPELLIAMSCLTKAKPGAYLVCNGYKDSAYVALALAARAMGLNVIIVLEMEEELDIVIEESSKLGVEPVIGVRAKLLTKIPGHFGSTAGKHGKFGLPAEKIYEVAKKLKALNKLHWLKLLHFHVGSMIPTTDIVFKAASEASDIYCALVKEYGVETMTTLDCGGGLGVDYDGTRSGSSDMSVAYGLEEYASSIVQAVRLKCDYHGVPHPVLCTESGRAMASYHSMIILEALSAIPEPKDDEDEATTEQLHGRIRDLSSKLQPTGLSMSSHAVHIKKHGIEMYKLGKKLSKSVTTDAHTIYNYHMNLSVFSLMPDYWGIQHLFPMMPVSRLDEKPTHKATLVDVTCDSDGKVDKFIRDTETMPLHPLDPKLGGYYVAVLLTGAYQEALSNKHNLFGGPSLVRVVGTGNGGAFNVEAALLGSTTEELIGTVSYDVKQDISSVIEERARENKVWEMVEKLVESGLHTMPYLADYKPPPMA.

Lys104 bears the N6-(pyridoxal phosphate)lysine mark. A substrate-binding site is contributed by 290 to 300 (LDCGGGLGVDY).

It belongs to the Orn/Lys/Arg decarboxylase class-II family. SpeA subfamily. It depends on pyridoxal 5'-phosphate as a cofactor. Mg(2+) is required as a cofactor.

It carries out the reaction L-arginine + H(+) = agmatine + CO2. It participates in amine and polyamine biosynthesis; agmatine biosynthesis; agmatine from L-arginine: step 1/1. The sequence is that of Arginine decarboxylase (SPE1) from Avena sativa (Oat).